We begin with the raw amino-acid sequence, 503 residues long: Xylan O-acetyltransferase 12 (503 aa).

Residues 1 to 54 (MWSALFSHLREVHKRSGVKEEKLIMKSPAAAGEAAGCHKPQATATNKMTVLQSP) are Cytoplasmic-facing. The chain crosses the membrane as a helical; Signal-anchor for type II membrane protein span at residues 55–77 (LGLRTILTSLVAFFIVVSSVSLL). The Lumenal segment spans residues 78–503 (FDRSQDAQAQ…EFLYAYLMHK (426 aa)). Intrachain disulfides connect Cys153/Cys204, Cys175/Cys240, Cys184/Cys484, and Cys400/Cys480. 4 N-linked (GlcNAc...) asparagine glycosylation sites follow: Asn154, Asn164, Asn190, and Asn210. The GDS motif signature appears at 227–229 (GDS). The active-site Nucleophile is the Ser229. 5 N-linked (GlcNAc...) asparagine glycosylation sites follow: Asn256, Asn268, Asn373, Asn402, and Asn443. Residue Asp479 is the Proton donor of the active site. The DXXH motif signature appears at 479 to 482 (DCTH). His482 functions as the Proton acceptor in the catalytic mechanism.

The protein belongs to the PC-esterase family. TBL subfamily.

The protein localises to the golgi apparatus membrane. Functionally, xylan acetyltransferase required for 2-O- and 3-O-monoacetylation of xylosyl residues in xylan. Catalyzes the 2-O-acetylation of xylan, followed by nonenzymatic acetyl migration to the O-3 position, resulting in products that are monoacetylated at both O-2 and O-3 positions. The sequence is that of Xylan O-acetyltransferase 12 from Oryza sativa subsp. japonica (Rice).